A 632-amino-acid polypeptide reads, in one-letter code: Protein NSP-INTERACTING KINASE 3 (632 aa).

A signal peptide spans 1-25 (MEGVRFVVWRLGFLVFVWFFDISSA). Residues 26-238 (TLSPTGVNYE…GTRTNGHHVA (213 aa)) lie on the Extracellular side of the membrane. N-linked (GlcNAc...) asparagine glycosylation is present at asparagine 96. LRR repeat units follow at residues 97–121 (LTYLQSVVLQNNAITGPIPETIGRL), 122–145 (EKLQSLDLSNNSFTGEIPASLGEL), 147–168 (NLNYLRLNNNSLIGTCPESLSK), and 169–193 (IEGLTLVDISYNNLSGSLPKVSART). Residues asparagine 131, asparagine 155, asparagine 181, and asparagine 210 are each glycosylated (N-linked (GlcNAc...) asparagine). The helical transmembrane segment at 239 to 259 (LAFAASFSAAFFVFFTSGMFL) threads the bilayer. Residues 260–632 (WWRYRRNKQI…VEAIELSGPR (373 aa)) are Cytoplasmic-facing. Position 298 is a phosphothreonine (threonine 298). Positions 301–584 (FNSKNILGRG…EGDGLAERWE (284 aa)) constitute a Protein kinase domain. 307–315 (LGRGGYGIV) serves as a coordination point for ATP. Threonine 324 is modified (phosphothreonine). Lysine 329 contributes to the ATP binding site. Residues serine 382 and serine 385 each carry the phosphoserine modification. The interval 415–495 (YLHEQCDPKI…DVFGFGILLL (81 aa)) is interaction with geminivirus NSP protein. The active-site Proton acceptor is aspartate 428. Threonine 461, threonine 462, and threonine 467 each carry phosphothreonine. Phosphotyrosine is present on tyrosine 475. Residue serine 477 is modified to Phosphoserine. Phosphothreonine is present on threonine 478. Serine 482 is modified (phosphoserine). The residue at position 557 (threonine 557) is a Phosphothreonine.

Belongs to the protein kinase superfamily. Ser/Thr protein kinase family. As to quaternary structure, oligomer. Interacts with geminivirus nuclear shuttle protein (NSP). In terms of processing, autophosphorylated. Expressed in seedlings, leaves and flowers.

The protein localises to the cell membrane. The enzyme catalyses L-seryl-[protein] + ATP = O-phospho-L-seryl-[protein] + ADP + H(+). It carries out the reaction L-threonyl-[protein] + ATP = O-phospho-L-threonyl-[protein] + ADP + H(+). Inhibited by the viral nuclear shuttle protein (NSP) that binds to the region required for oligomerization. Involved in defense response to geminivirus infection. This is Protein NSP-INTERACTING KINASE 3 (NIK3) from Arabidopsis thaliana (Mouse-ear cress).